A 928-amino-acid chain; its full sequence is Isoleucine--tRNA ligase (928 aa).

The short motif at 57-67 (PFANGNIHMGH) is the 'HIGH' region element. L-isoleucyl-5'-AMP is bound at residue glutamate 552. The 'KMSKS' region motif lies at 593-597 (KMSKS). Lysine 596 is an ATP binding site. Positions 887, 890, 907, and 910 each coordinate Zn(2+).

It belongs to the class-I aminoacyl-tRNA synthetase family. IleS type 1 subfamily. In terms of assembly, monomer. Zn(2+) is required as a cofactor.

It is found in the cytoplasm. The enzyme catalyses tRNA(Ile) + L-isoleucine + ATP = L-isoleucyl-tRNA(Ile) + AMP + diphosphate. In terms of biological role, catalyzes the attachment of isoleucine to tRNA(Ile). As IleRS can inadvertently accommodate and process structurally similar amino acids such as valine, to avoid such errors it has two additional distinct tRNA(Ile)-dependent editing activities. One activity is designated as 'pretransfer' editing and involves the hydrolysis of activated Val-AMP. The other activity is designated 'posttransfer' editing and involves deacylation of mischarged Val-tRNA(Ile). The chain is Isoleucine--tRNA ligase from Lacticaseibacillus casei (strain BL23) (Lactobacillus casei).